Consider the following 185-residue polypeptide: Elongation factor P (185 aa).

Belongs to the elongation factor P family.

The protein localises to the cytoplasm. It participates in protein biosynthesis; polypeptide chain elongation. Its function is as follows. Involved in peptide bond synthesis. Stimulates efficient translation and peptide-bond synthesis on native or reconstituted 70S ribosomes in vitro. Probably functions indirectly by altering the affinity of the ribosome for aminoacyl-tRNA, thus increasing their reactivity as acceptors for peptidyl transferase. The sequence is that of Elongation factor P from Desulforudis audaxviator (strain MP104C).